A 495-amino-acid chain; its full sequence is MRINPTTSGSTVSTLEEKNLGRIAQIIGPVLDVVFPPGKMPNIYNALVVKGRDTVGQQINVTCEVQQLLGNNRVRAVAMSATDGLTRGMEVIDTGAALSVPVGGATLGRIFNVLGEPVDNLGPVDTRTTSPIHRSAPAFIQLDTKLSIFETGIKVVDLLAPYRRGGKIGLFGGAGVGKTVLIMELINNIAKAHGGVSVFGGVGERTREGNDLYMEMKESGVINEKNIAESKVALVYGQMNEPPGARMRVGLTALTMAEYFRDVNEQDVLLFIDNIFRFVQAGSEVSALLGRMPSAVGYQPTLSTEMGSLQERITSTKEGSITSIQAVYVPADDLTDPAPATTFAHLDATTVLSRGLSAKGIYPAVDPLDSTSTMLQPRIVGEEHYETAQRVKQTLQRYKELQDIIAILGLDELSEEDRLTVARARKIERFLSQPFFVAEVFTGSPGKYVGLAETIRGFQLILSGELDGLPEQAFYLVGNIDEATAKAMNLEGEKK.

172–179 (GGAGVGKT) provides a ligand contact to ATP.

This sequence belongs to the ATPase alpha/beta chains family. F-type ATPases have 2 components, CF(1) - the catalytic core - and CF(0) - the membrane proton channel. CF(1) has five subunits: alpha(3), beta(3), gamma(1), delta(1), epsilon(1). CF(0) has four main subunits: a(1), b(1), b'(1) and c(9-12).

The protein localises to the plastid. The protein resides in the chloroplast thylakoid membrane. The enzyme catalyses ATP + H2O + 4 H(+)(in) = ADP + phosphate + 5 H(+)(out). In terms of biological role, produces ATP from ADP in the presence of a proton gradient across the membrane. The catalytic sites are hosted primarily by the beta subunits. The protein is ATP synthase subunit beta, chloroplastic of Hyacinthus orientalis (Common hyacinth).